The sequence spans 76 residues: Serine proteinase inhibitor IA-2 (76 aa).

Residue serine 1 is modified to N-acetylserine.

The protein belongs to the protease inhibitor I9 family.

In terms of biological role, specifically inhibits an intracellular serine proteinase (proteinase A). The protein is Serine proteinase inhibitor IA-2 of Pleurotus ostreatus (Oyster mushroom).